Here is a 295-residue protein sequence, read N- to C-terminus: Light-independent protochlorophyllide reductase iron-sulfur ATP-binding protein (295 aa).

Residues 39 to 44 and Lys68 each bind ATP; that span reads GIGKST. Residue Ser43 participates in Mg(2+) binding. Residues Cys124 and Cys158 each contribute to the [4Fe-4S] cluster site. 209–210 is an ATP binding site; the sequence is NR.

This sequence belongs to the NifH/BchL/ChlL family. In terms of assembly, homodimer. Protochlorophyllide reductase is composed of three subunits; ChlL, ChlN and ChlB. The cofactor is [4Fe-4S] cluster.

The catalysed reaction is chlorophyllide a + oxidized 2[4Fe-4S]-[ferredoxin] + 2 ADP + 2 phosphate = protochlorophyllide a + reduced 2[4Fe-4S]-[ferredoxin] + 2 ATP + 2 H2O. Its pathway is porphyrin-containing compound metabolism; chlorophyll biosynthesis (light-independent). Functionally, component of the dark-operative protochlorophyllide reductase (DPOR) that uses Mg-ATP and reduced ferredoxin to reduce ring D of protochlorophyllide (Pchlide) to form chlorophyllide a (Chlide). This reaction is light-independent. The L component serves as a unique electron donor to the NB-component of the complex, and binds Mg-ATP. The sequence is that of Light-independent protochlorophyllide reductase iron-sulfur ATP-binding protein from Prochlorococcus marinus (strain MIT 9215).